The chain runs to 448 residues: Inositol polyphosphate 5-phosphatase K (448 aa).

The tract at residues Ile16–Phe318 is catalytic. Residues Phe318–Ile448 form a required for interaction with GPR78 and PAK1 region. A required for ruffle localization region spans residues Glu321–Ile448.

Belongs to the inositol 1,4,5-trisphosphate 5-phosphatase type II family. In terms of assembly, interacts with GPR78; necessary for INPP5K localization at the endoplasmic reticulum. Interacts with PAK1; competes with GPR78. Ubiquitously expressed with highest levels in skeletal muscle, heart and kidney.

The protein resides in the endoplasmic reticulum. Its subcellular location is the cytoplasm. The catalysed reaction is 1D-myo-inositol 1,4,5-trisphosphate + H2O = 1D-myo-inositol 1,4-bisphosphate + phosphate. It carries out the reaction 1D-myo-inositol 1,3,4,5-tetrakisphosphate + H2O = 1D-myo-inositol 1,3,4-trisphosphate + phosphate. It catalyses the reaction a 1,2-diacyl-sn-glycero-3-phospho-(1D-myo-inositol-4,5-bisphosphate) + H2O = a 1,2-diacyl-sn-glycero-3-phospho-(1D-myo-inositol 4-phosphate) + phosphate. The enzyme catalyses a 1,2-diacyl-sn-glycero-3-phospho-(1D-myo-inositol-3,4,5-trisphosphate) + H2O = a 1,2-diacyl-sn-glycero-3-phospho-(1D-myo-inositol-3,4-bisphosphate) + phosphate. The catalysed reaction is 1,2-dioctanoyl-sn-glycero-3-phospho-(1D-myo-inositol-3,4,5-trisphosphate) + H2O = 1,2-dioctanoyl-sn-glycero-3-phospho-(1D-myo-inositol-3,4-bisphosphate) + phosphate. Inositol 5-phosphatase which acts on inositol 1,4,5-trisphosphate, inositol 1,3,4,5-tetrakisphosphate, phosphatidylinositol 4,5-bisphosphate and phosphatidylinositol 3,4,5-trisphosphate. Has 6-fold higher affinity for phosphatidylinositol 4,5-bisphosphate than for inositol 1,4,5-trisphosphate. Negatively regulates assembly of the actin cytoskeleton. Controls insulin-dependent glucose uptake among inositol 3,4,5-trisphosphate phosphatases; therefore, is the specific regulator for insulin signaling in skeletal muscle. This Homo sapiens (Human) protein is Inositol polyphosphate 5-phosphatase K.